A 188-amino-acid chain; its full sequence is Putative 3-methyladenine DNA glycosylase (188 aa).

The protein belongs to the DNA glycosylase MPG family.

The polypeptide is Putative 3-methyladenine DNA glycosylase (Ehrlichia ruminantium (strain Welgevonden)).